Consider the following 340-residue polypeptide: Deubiquitinase SseL (340 aa).

H223 is a catalytic residue. Catalysis depends on C285, which acts as the Nucleophile.

The protein belongs to the peptidase C79 family.

It localises to the secreted. The protein localises to the host cytoplasm. In terms of biological role, effector proteins function to alter host cell physiology and promote bacterial survival in host tissues. This protease targets the host cell ubiquitin pathway by acting as a deubiquitinase in infected host cells. This Salmonella paratyphi B (strain ATCC BAA-1250 / SPB7) protein is Deubiquitinase SseL (sseL).